We begin with the raw amino-acid sequence, 396 residues long: Pre-mRNA-splicing regulator WTAP (396 aa).

M1 carries the post-translational modification N-acetylmethionine. S14 carries the post-translational modification Phosphoserine. Low complexity-rich tracts occupy residues 240 to 257 (QQQQ…TTSS) and 278 to 291 (SNGS…SGSG). The segment at 240–396 (QQQQSQASAP…SSVNVQGAVL (157 aa)) is disordered. Residues S297, S305, S306, and S341 each carry the phosphoserine modification. A compositionally biased stretch (low complexity) spans 305-316 (SSSGNGNKASNS). The span at 340 to 351 (DSPTGSENSLTH) shows a compositional bias: polar residues. T350 is modified (phosphothreonine). Positions 352-368 (HSNDTDSSHDPQEEKAV) are enriched in basic and acidic residues. Residues 380–396 (HVQNGLDSSVNVQGAVL) are compositionally biased toward polar residues. S388 carries the phosphoserine modification.

The protein belongs to the fl(2)d family. In terms of assembly, component of the WMM complex, a N6-methyltransferase complex composed of a catalytic subcomplex, named MAC, and of an associated subcomplex, named MACOM. The MAC subcomplex is composed of METTL3 and METTL14. The MACOM subcomplex is composed of WTAP, ZC3H13, CBLL1/HAKAI, VIRMA, and, in some cases of RBM15 (RBM15 or RBM15B). Interacts with WT1. Also a component of a MACOM-like complex, named WTAP complex, composed of WTAP, ZC3H13, CBLL1, VIRMA, RBM15, BCLAF1 and THRAP3. Interacts with CPNE4 (via VWFA domain).

It is found in the nucleus speckle. The protein resides in the nucleus. The protein localises to the nucleoplasm. It localises to the cytoplasm. Functionally, associated component of the WMM complex, a complex that mediates N6-methyladenosine (m6A) methylation of RNAs, a modification that plays a role in the efficiency of mRNA splicing and RNA processing. Acts as a key regulator of m6A methylation by promoting m6A methylation of mRNAs at the 3'-UTR. Required for accumulation of METTL3 and METTL14 to nuclear speckle. Acts as a mRNA splicing regulator. Regulates G2/M cell-cycle transition by binding to the 3' UTR of CCNA2, which enhances its stability. Impairs WT1 DNA-binding ability and inhibits expression of WT1 target genes. This chain is Pre-mRNA-splicing regulator WTAP, found in Mus musculus (Mouse).